A 126-amino-acid polypeptide reads, in one-letter code: MAKFTQDELLEAFGEMTLVELSDFVKAFEEKFDVEAAAPVAAVAAAAPGAAPAEEEKDEFTVVLSAVGDKKIQVIKAVRAITNLGLAEAKALVDGAPKPVLENAKKEDAEKAKAQLEEAGATVELK.

A compositionally biased stretch (basic and acidic residues) spans 104–116 (AKKEDAEKAKAQL). The segment at 104 to 126 (AKKEDAEKAKAQLEEAGATVELK) is disordered. Positions 117–126 (EEAGATVELK) are enriched in low complexity.

The protein belongs to the bacterial ribosomal protein bL12 family. Homodimer. Part of the ribosomal stalk of the 50S ribosomal subunit. Forms a multimeric L10(L12)X complex, where L10 forms an elongated spine to which 2 to 4 L12 dimers bind in a sequential fashion. Binds GTP-bound translation factors.

In terms of biological role, forms part of the ribosomal stalk which helps the ribosome interact with GTP-bound translation factors. Is thus essential for accurate translation. This Bifidobacterium animalis subsp. lactis (strain AD011) protein is Large ribosomal subunit protein bL12.